A 167-amino-acid polypeptide reads, in one-letter code: Epithelial membrane protein 2 (167 aa).

The helical transmembrane segment at 1-21 (MLVLLAFIIAFHITSAALLFI) threads the bilayer. N-linked (GlcNAc...) asparagine glycans are attached at residues asparagine 44, asparagine 47, and asparagine 52. A run of 3 helical transmembrane segments spans residues 67-87 (TMILSTILCCIAFFIFVLQLF), 95-115 (FVLTSIIQLMSCLCVMIAASI), and 143-163 (YILAWVAFACTFISGMMYLIL).

It belongs to the PMP-22/EMP/MP20 family. Interacts with PTK2; regulates PTK2 activation and localization. Interacts with ITGB3; regulates the levels of the heterodimer ITGA5-ITGB3 integrin surface expression. Interacts with P2RX7 (via C-terminus). Interacts with ITGB1; the interaction may be direct or indirect and ITGB1 has a heterodimer form. In terms of tissue distribution, expressed in ciliary body epithelia, sclera, cornea, and retinal pigment epithelium (at protein level). Expressed in lung and endometrial tissue; expression is particularly abundant in secretory endometrium (at protein level). Expressed in placental villous syncytiotrophoblasts and cytotrophoblasts and on the membrane of interstitial trophoblasts (at protein level).

Its subcellular location is the golgi apparatus membrane. It is found in the cell membrane. It localises to the apical cell membrane. The protein resides in the membrane raft. The protein localises to the cytoplasm. Its subcellular location is the nucleus. It is found in the perinuclear region. Functionally, functions as a key regulator of cell membrane composition by regulating protein surface expression. Also, plays a role in regulation of processes including cell migration, cell proliferation, cell contraction and cell adhesion. Regulates transepithelial migration of neutrophils into the alveolar lumen, potentially via mediation of cell surface expression of adhesion markers and lipid raft formation. Negatively regulates caveolae formation by reducing CAV1 expression and CAV1 amount by increasing lysosomal degradation. Facilitates surface trafficking and formation of lipid rafts bearing GPI-anchor proteins. Regulates surface expression of MHC1 and ICAM1 proteins increasing susceptibility to T-cell mediated cytotoxicity. Regulates the plasma membrane expression of the integrin heterodimers ITGA6-ITGB1, ITGA5-ITGB3 and ITGA5-ITGB1 resulting in modulation of cell-matrix adhesion. Also regulates many processes through PTK2. Regulates blood vessel endothelial cell migration and angiogenesis by regulating VEGF protein expression through PTK2 activation. Regulates cell migration and cell contraction through PTK2 and SRC activation. Regulates focal adhesion density, F-actin conformation and cell adhesion capacity through interaction with PTK2. Positively regulates cell proliferation. Plays a role during cell death and cell blebbing. Promotes angiogenesis and vasculogenesis through induction of VEGFA via a HIF1A-dependent pathway. Also plays a role in embryo implantation by regulating surface trafficking of integrin heterodimer ITGA5-ITGB3. Plays a role in placental angiogenesis and uterine natural killer cell regulation at the maternal-fetal placental interface, however not required in the maternal tissues for a viable pregnancy. Involved in the early stages of embryogenic development and cardiogenesis, potentially via regulation of epithelial-mesenchymal transition timing. May play a role in glomerular filtration. This chain is Epithelial membrane protein 2 (EMP2), found in Homo sapiens (Human).